A 296-amino-acid chain; its full sequence is Urease accessory protein UreD (296 aa).

This sequence belongs to the UreD family. As to quaternary structure, ureD, UreF and UreG form a complex that acts as a GTP-hydrolysis-dependent molecular chaperone, activating the urease apoprotein by helping to assemble the nickel containing metallocenter of UreC. The UreE protein probably delivers the nickel.

The protein localises to the cytoplasm. Functionally, required for maturation of urease via the functional incorporation of the urease nickel metallocenter. The chain is Urease accessory protein UreD from Methylibium petroleiphilum (strain ATCC BAA-1232 / LMG 22953 / PM1).